We begin with the raw amino-acid sequence, 517 residues long: UDP-N-acetylmuramoyl-L-alanyl-D-glutamate--2,6-diaminopimelate ligase (517 aa).

Residues L34 and S36 each contribute to the UDP-N-acetyl-alpha-D-muramoyl-L-alanyl-D-glutamate site. Residue 122–128 (GTSGKTT) participates in ATP binding. UDP-N-acetyl-alpha-D-muramoyl-L-alanyl-D-glutamate-binding positions include 164–165 (TT), S191, and R199. K231 carries the post-translational modification N6-carboxylysine. Residues R394, 418–421 (DNPR), G476, and E480 each bind meso-2,6-diaminopimelate. The Meso-diaminopimelate recognition motif motif lies at 418 to 421 (DNPR).

The protein belongs to the MurCDEF family. MurE subfamily. Mg(2+) is required as a cofactor. Post-translationally, carboxylation is probably crucial for Mg(2+) binding and, consequently, for the gamma-phosphate positioning of ATP.

It localises to the cytoplasm. It catalyses the reaction UDP-N-acetyl-alpha-D-muramoyl-L-alanyl-D-glutamate + meso-2,6-diaminopimelate + ATP = UDP-N-acetyl-alpha-D-muramoyl-L-alanyl-gamma-D-glutamyl-meso-2,6-diaminopimelate + ADP + phosphate + H(+). It participates in cell wall biogenesis; peptidoglycan biosynthesis. Catalyzes the addition of meso-diaminopimelic acid to the nucleotide precursor UDP-N-acetylmuramoyl-L-alanyl-D-glutamate (UMAG) in the biosynthesis of bacterial cell-wall peptidoglycan. This Corynebacterium glutamicum (strain ATCC 13032 / DSM 20300 / JCM 1318 / BCRC 11384 / CCUG 27702 / LMG 3730 / NBRC 12168 / NCIMB 10025 / NRRL B-2784 / 534) protein is UDP-N-acetylmuramoyl-L-alanyl-D-glutamate--2,6-diaminopimelate ligase.